We begin with the raw amino-acid sequence, 351 residues long: Protein-glutamate methylesterase/protein-glutamine glutaminase 2 (351 aa).

One can recognise a Response regulatory domain in the interval 4–121 (KVLVVDDSTL…PQGFNEYQDL (118 aa)). A 4-aspartylphosphate modification is found at Asp55. The region spanning 156-348 (RTVNTQLVAI…DKLLQYLASV (193 aa)) is the CheB-type methylesterase domain. Residues Ser168, His194, and Asp290 contribute to the active site.

Belongs to the CheB family. Post-translationally, phosphorylated by CheA. Phosphorylation of the N-terminal regulatory domain activates the methylesterase activity.

It is found in the cytoplasm. It catalyses the reaction [protein]-L-glutamate 5-O-methyl ester + H2O = L-glutamyl-[protein] + methanol + H(+). The catalysed reaction is L-glutaminyl-[protein] + H2O = L-glutamyl-[protein] + NH4(+). In terms of biological role, involved in chemotaxis. Part of a chemotaxis signal transduction system that modulates chemotaxis in response to various stimuli. Catalyzes the demethylation of specific methylglutamate residues introduced into the chemoreceptors (methyl-accepting chemotaxis proteins or MCP) by CheR. Also mediates the irreversible deamidation of specific glutamine residues to glutamic acid. This is Protein-glutamate methylesterase/protein-glutamine glutaminase 2 from Shewanella oneidensis (strain ATCC 700550 / JCM 31522 / CIP 106686 / LMG 19005 / NCIMB 14063 / MR-1).